We begin with the raw amino-acid sequence, 79 residues long: Acyl carrier protein (79 aa).

In terms of domain architecture, Carrier spans 2–77; sequence SEIGERVKKI…DATKFLEKNA (76 aa). An O-(pantetheine 4'-phosphoryl)serine modification is found at serine 37.

It belongs to the acyl carrier protein (ACP) family. Post-translationally, 4'-phosphopantetheine is transferred from CoA to a specific serine of apo-ACP by AcpS. This modification is essential for activity because fatty acids are bound in thioester linkage to the sulfhydryl of the prosthetic group.

It localises to the cytoplasm. It participates in lipid metabolism; fatty acid biosynthesis. Carrier of the growing fatty acid chain in fatty acid biosynthesis. This Afipia carboxidovorans (strain ATCC 49405 / DSM 1227 / KCTC 32145 / OM5) (Oligotropha carboxidovorans) protein is Acyl carrier protein.